A 101-amino-acid polypeptide reads, in one-letter code: Gamma-secretase subunit PEN-2 (101 aa).

Residues 1-17 are Cytoplasmic-facing; it reads MNLERVSNEEKLNLCRK. An intramembrane region (helical) is located at residues 18–36; that stretch reads YYLGGFAFLPFLWLVNIFW. The Cytoplasmic segment spans residues 37-57; that stretch reads FFKEAFFAPAYTEQSQIKGYV. The chain crosses the membrane as a helical span at residues 58–78; the sequence is WRSAVGFLFWVIVLTTWITIF. Residues 79–101 lie on the Lumenal side of the membrane; it reads QIYRPRWGALGDYLSFTIPLGTP.

It belongs to the PEN-2 family. In terms of assembly, the functional gamma-secretase complex is composed of at least four polypeptides: a presenilin homodimer (PSEN1 or PSEN2), nicastrin (NCSTN), APH1 (APH1A or APH1B) and PSENEN.

It localises to the endoplasmic reticulum membrane. It is found in the golgi apparatus. The protein localises to the golgi stack membrane. Its subcellular location is the cell membrane. The protein resides in the membrane. Essential subunit of the gamma-secretase complex, an endoprotease complex that catalyzes the intramembrane cleavage of integral membrane proteins such as Notch receptors and APP (amyloid-beta precursor protein). The gamma-secretase complex plays a role in Notch and Wnt signaling cascades and regulation of downstream processes via its role in processing key regulatory proteins, and by regulating cytosolic CTNNB1 levels. PSENEN modulates both endoproteolysis of presenilin and gamma-secretase activity. The sequence is that of Gamma-secretase subunit PEN-2 (Psenen) from Rattus norvegicus (Rat).